The following is a 335-amino-acid chain: Calcium/calmodulin-dependent protein kinase type I (335 aa).

Positions 31–291 (YRVGRVLGGG…AADALKHPFL (261 aa)) constitute a Protein kinase domain. Position 37 to 45 (37 to 45 (LGGGTYATV)) interacts with ATP. Catalysis depends on Asp-154, which acts as the Proton acceptor. Thr-192 carries the post-translational modification Phosphothreonine; by autocatalysis. Positions 310 to 334 (NARKTFRTAYNAVRAFNTWKKLENK) are calmodulin-binding.

The protein belongs to the protein kinase superfamily. CAMK Ser/Thr protein kinase family. CaMK subfamily.

Its subcellular location is the cytoplasm. The catalysed reaction is L-seryl-[protein] + ATP = O-phospho-L-seryl-[protein] + ADP + H(+). It catalyses the reaction L-threonyl-[protein] + ATP = O-phospho-L-threonyl-[protein] + ADP + H(+). Functionally, important in cell cycle regulation. This Schizosaccharomyces pombe (strain 972 / ATCC 24843) (Fission yeast) protein is Calcium/calmodulin-dependent protein kinase type I (cmk1).